Reading from the N-terminus, the 175-residue chain is NAD(P)H-quinone oxidoreductase subunit J (175 aa).

Belongs to the complex I 30 kDa subunit family. As to quaternary structure, NDH-1 can be composed of about 15 different subunits; different subcomplexes with different compositions have been identified which probably have different functions.

Its subcellular location is the cellular thylakoid membrane. It carries out the reaction a plastoquinone + NADH + (n+1) H(+)(in) = a plastoquinol + NAD(+) + n H(+)(out). It catalyses the reaction a plastoquinone + NADPH + (n+1) H(+)(in) = a plastoquinol + NADP(+) + n H(+)(out). In terms of biological role, NDH-1 shuttles electrons from an unknown electron donor, via FMN and iron-sulfur (Fe-S) centers, to quinones in the respiratory and/or the photosynthetic chain. The immediate electron acceptor for the enzyme in this species is believed to be plastoquinone. Couples the redox reaction to proton translocation, and thus conserves the redox energy in a proton gradient. Cyanobacterial NDH-1 also plays a role in inorganic carbon-concentration. This Trichormus variabilis (strain ATCC 29413 / PCC 7937) (Anabaena variabilis) protein is NAD(P)H-quinone oxidoreductase subunit J.